We begin with the raw amino-acid sequence, 399 residues long: Probable aspartate/prephenate aminotransferase (399 aa).

Residues Gly-39, Trp-125, and Asn-175 each contribute to the L-aspartate site. Position 239 is an N6-(pyridoxal phosphate)lysine (Lys-239). Arg-375 provides a ligand contact to L-aspartate.

The protein belongs to the class-I pyridoxal-phosphate-dependent aminotransferase family. As to quaternary structure, homodimer. It depends on pyridoxal 5'-phosphate as a cofactor.

Its subcellular location is the cytoplasm. It carries out the reaction L-aspartate + 2-oxoglutarate = oxaloacetate + L-glutamate. The catalysed reaction is L-arogenate + 2-oxoglutarate = prephenate + L-glutamate. In terms of biological role, catalyzes the reversible conversion of aspartate and 2-oxoglutarate to glutamate and oxaloacetate. Can also transaminate prephenate in the presence of glutamate. In Rickettsia bellii (strain RML369-C), this protein is Probable aspartate/prephenate aminotransferase (aatA).